A 238-amino-acid polypeptide reads, in one-letter code: uncharacterized protein (238 aa).

This is an uncharacterized protein from Escherichia coli (strain K12).